Consider the following 221-residue polypeptide: MGQKVHPYGLRVGVTKDWLAKWYAKDKDFPNILVEDIKIRNYIKEKLYAAGIPQIVIERASNRIKIDIYAAKPGMVIGKGGTGVDRLREELEKMTNKTVILNIIEVKTPELSAQLVAENIAAQIEKRISYRRAMKQAIARAMKLGAKGIKIACSGRLAGAEIARTERYHEGVVPLQTLRADIDYGFAEANTTYGKIGVKVWINKGEILPQPKKQVTAEGGK.

The region spanning 39–107 (IRNYIKEKLY…TVILNIIEVK (69 aa)) is the KH type-2 domain.

This sequence belongs to the universal ribosomal protein uS3 family. In terms of assembly, part of the 30S ribosomal subunit. Forms a tight complex with proteins S10 and S14.

Binds the lower part of the 30S subunit head. Binds mRNA in the 70S ribosome, positioning it for translation. The sequence is that of Small ribosomal subunit protein uS3 from Caldanaerobacter subterraneus subsp. tengcongensis (strain DSM 15242 / JCM 11007 / NBRC 100824 / MB4) (Thermoanaerobacter tengcongensis).